Consider the following 729-residue polypeptide: Circadian input-output histidine kinase CikA (729 aa).

The tract at residues 1–169 (MPQPIFDRIL…QVTTQIRQSL (169 aa)) is N-terminal domain. The tract at residues 170-314 (ELPELLKIAV…VEFLTHLSQH (145 aa)) is GAF domain. Residues 366 to 587 (TMSHELRTPL…TFTVGLPAIS (222 aa)) form the Histidine kinase domain. H369 is modified (phosphohistidine; by autocatalysis). The tract at residues 613–729 (EGRIVLVSED…GLTSLATSAQ (117 aa)) is psR domain, binds KaiB.

In the N-terminal section; belongs to the phytochrome family. As to quaternary structure, homodimer. Part of the circadian clock (KaiA, KaiB, KaiC, CikA, RpaA, SasA), the composition of which varies during the circadian cycle. KaiA and CikA compete for binding to KaiB(fs). The PsR domain binds the KaiB:KaiC CI complex but poorly to either protein alone. KaiA and CikA bind to the same region of the KaiB(fs) form and therefore compete.

The catalysed reaction is ATP + protein L-histidine = ADP + protein N-phospho-L-histidine.. Its function is as follows. Functions in an input pathway to the Kai circadian clock. Senses oxidized quinones via its C-terminal pseudo-receiver domain, providing a link between cell metabolism and the clock. Affects the ratio of phosphorylated to unphosphorylated KaiC, binds quinones via its pseudo-receptor domain. Quinone-binding destabilizes the protein rapidly. Autophosphorylates, does not transfer the phosphate to its pseudo-receiver (PsR) domain. May play a role in cell division. Also functions in a two-component CikA/RpaA output pathway from the circadian clock, negatively regulating kaiBC expression independently of labA and of sasA. One of three clock output pathways. Dephosphorylates phospho-RpaA, enhanced by KaiB and KaiC, has only modest kinase activity on RpaA. The sequence is that of Circadian input-output histidine kinase CikA from Thermosynechococcus vestitus (strain NIES-2133 / IAM M-273 / BP-1).